Reading from the N-terminus, the 23-residue chain is Acidic phospholipase A2 CTs-A1 (23 aa).

Ca(2+) serves as cofactor. Post-translationally, contains 7 disulfide bonds. Expressed by the venom gland.

The protein resides in the secreted. It carries out the reaction a 1,2-diacyl-sn-glycero-3-phosphocholine + H2O = a 1-acyl-sn-glycero-3-phosphocholine + a fatty acid + H(+). Snake venom phospholipase A2 (PLA2) that shows a moderate inhibition of ADP-induced human platelet aggregation when tested on platelet rich plasma. Exhibits moderate hydrolytic activities and prefers the anionic micelles (dPPC with deoxycholate) to the zwitterionic micelles (dPPC with Triton X-100). PLA2 catalyzes the calcium-dependent hydrolysis of the 2-acyl groups in 3-sn-phosphoglycerides. The protein is Acidic phospholipase A2 CTs-A1 of Trimeresurus stejnegeri (Chinese green tree viper).